Reading from the N-terminus, the 284-residue chain is Transcription factor lir-3 (284 aa).

Residues 50–60 (EPRISRDELRE) are compositionally biased toward basic and acidic residues. The segment at 50–71 (EPRISRDELRETASSPVTFETR) is disordered. The C2H2-type zinc-finger motif lies at 224-247 (YKCKQCDYLDYRKSTMRKHTVSQH).

As to expression, expressed in FLP neurons.

It localises to the nucleus. Positively regulates the RNA polymerase III-associated transcription of small non-coding RNAs. This is Transcription factor lir-3 from Caenorhabditis elegans.